The following is a 250-amino-acid chain: Trypsin (250 aa).

Positions 1 to 15 (MRLLALLLMVGAAVA) are cleaved as a signal peptide. The propeptide at 16 to 22 (VPREDGR) is activation peptide. One can recognise a Peptidase S1 domain in the interval 23 to 247 (IIGGHECAAH…FLGWIERTLE (225 aa)). 6 cysteine pairs are disulfide-bonded: C29-C163, C47-C63, C133-C236, C140-C209, C174-C188, and C199-C223. Catalysis depends on charge relay system residues H62 and D106. The active-site Charge relay system is the S203.

It belongs to the peptidase S1 family.

The protein resides in the secreted. It localises to the extracellular space. The enzyme catalyses Preferential cleavage: Arg-|-Xaa, Lys-|-Xaa.. In Pleuronectes platessa (European plaice), this protein is Trypsin.